Consider the following 351-residue polypeptide: Nicotinate-nucleotide--dimethylbenzimidazole phosphoribosyltransferase (351 aa).

Glu-318 acts as the Proton acceptor in catalysis.

This sequence belongs to the CobT family.

The catalysed reaction is 5,6-dimethylbenzimidazole + nicotinate beta-D-ribonucleotide = alpha-ribazole 5'-phosphate + nicotinate + H(+). It functions in the pathway nucleoside biosynthesis; alpha-ribazole biosynthesis; alpha-ribazole from 5,6-dimethylbenzimidazole: step 1/2. In terms of biological role, catalyzes the synthesis of alpha-ribazole-5'-phosphate from nicotinate mononucleotide (NAMN) and 5,6-dimethylbenzimidazole (DMB). This is Nicotinate-nucleotide--dimethylbenzimidazole phosphoribosyltransferase from Chloroflexus aurantiacus (strain ATCC 29366 / DSM 635 / J-10-fl).